Here is a 372-residue protein sequence, read N- to C-terminus: Glutamate 5-kinase (372 aa).

K14 provides a ligand contact to ATP. Residues S54, D141, and N153 each coordinate substrate. An ATP-binding site is contributed by 173-174 (TD). The PUA domain occupies 280–358 (RGHVVIDAGA…GEIETVLGYM (79 aa)).

This sequence belongs to the glutamate 5-kinase family.

It localises to the cytoplasm. The enzyme catalyses L-glutamate + ATP = L-glutamyl 5-phosphate + ADP. It participates in amino-acid biosynthesis; L-proline biosynthesis; L-glutamate 5-semialdehyde from L-glutamate: step 1/2. In terms of biological role, catalyzes the transfer of a phosphate group to glutamate to form L-glutamate 5-phosphate. This Burkholderia ambifaria (strain ATCC BAA-244 / DSM 16087 / CCUG 44356 / LMG 19182 / AMMD) (Burkholderia cepacia (strain AMMD)) protein is Glutamate 5-kinase.